A 561-amino-acid polypeptide reads, in one-letter code: Corneodesmosin (561 aa).

The signal sequence occupies residues 1–32 (MGSSRAPRMGSVGGHGLMALLMAGLILPGILA). Disordered regions lie at residues 41 to 275 (PCKD…HTVS), 415 to 466 (GSVS…SSSL), and 536 to 561 (PLGP…LEKS). Low complexity predominate over residues 61 to 99 (GSNSISSQGGSSSFSSQGGSSSFSSHGGSSSSQGSSSGS). The segment covering 116-127 (GSGGSRPGGSGS) has biased composition (gly residues). 2 stretches are compositionally biased toward low complexity: residues 128–207 (QSGS…SSGS) and 224–248 (TSGM…PCSS). Residues 415–430 (GSVSSKGPCSGTRIQI) are compositionally biased toward polar residues. The span at 431–466 (TSSSSSTSYHPCSGGPSQGPCSSPGTGSISGGSSSL) shows a compositional bias: low complexity.

It localises to the secreted. Functionally, important for the epidermal barrier integrity. This is Corneodesmosin (Cdsn) from Mus musculus (Mouse).